We begin with the raw amino-acid sequence, 185 residues long: Ribosome-recycling factor (185 aa).

Belongs to the RRF family.

It localises to the cytoplasm. Responsible for the release of ribosomes from messenger RNA at the termination of protein biosynthesis. May increase the efficiency of translation by recycling ribosomes from one round of translation to another. This chain is Ribosome-recycling factor, found in Listeria welshimeri serovar 6b (strain ATCC 35897 / DSM 20650 / CCUG 15529 / CIP 8149 / NCTC 11857 / SLCC 5334 / V8).